A 460-amino-acid chain; its full sequence is Methylenetetrahydrofolate--tRNA-(uracil-5-)-methyltransferase TrmFO (460 aa).

Residue 15–20 participates in FAD binding; the sequence is GAGLAG.

The protein belongs to the MnmG family. TrmFO subfamily. Requires FAD as cofactor.

The protein resides in the cytoplasm. The enzyme catalyses uridine(54) in tRNA + (6R)-5,10-methylene-5,6,7,8-tetrahydrofolate + NADH + H(+) = 5-methyluridine(54) in tRNA + (6S)-5,6,7,8-tetrahydrofolate + NAD(+). It catalyses the reaction uridine(54) in tRNA + (6R)-5,10-methylene-5,6,7,8-tetrahydrofolate + NADPH + H(+) = 5-methyluridine(54) in tRNA + (6S)-5,6,7,8-tetrahydrofolate + NADP(+). In terms of biological role, catalyzes the folate-dependent formation of 5-methyl-uridine at position 54 (M-5-U54) in all tRNAs. This is Methylenetetrahydrofolate--tRNA-(uracil-5-)-methyltransferase TrmFO from Synechococcus sp. (strain CC9902).